Consider the following 402-residue polypeptide: Phosphoglycerate kinase (402 aa).

Substrate is bound by residues 24–26 (DLN), arginine 39, 62–65 (HLGR), arginine 121, and arginine 161. ATP is bound by residues lysine 211, glycine 299, glutamate 330, and 359 to 362 (GGDS).

The protein belongs to the phosphoglycerate kinase family. Monomer.

The protein localises to the cytoplasm. The enzyme catalyses (2R)-3-phosphoglycerate + ATP = (2R)-3-phospho-glyceroyl phosphate + ADP. The protein operates within carbohydrate degradation; glycolysis; pyruvate from D-glyceraldehyde 3-phosphate: step 2/5. This chain is Phosphoglycerate kinase, found in Mycolicibacterium gilvum (strain PYR-GCK) (Mycobacterium gilvum (strain PYR-GCK)).